The following is a 217-amino-acid chain: Probable GTP-binding protein EngB (217 aa).

Positions 33 to 217 (GPTEIAFAGR…RAAIELAVTR (185 aa)) constitute an EngB-type G domain. GTP contacts are provided by residues 41–48 (GRSNVGKS), 68–72 (GRTQE), 95–98 (DMPG), 162–165 (TKTD), and 196–198 (TSS). Mg(2+) is bound by residues Ser-48 and Thr-70.

This sequence belongs to the TRAFAC class TrmE-Era-EngA-EngB-Septin-like GTPase superfamily. EngB GTPase family. Requires Mg(2+) as cofactor.

Functionally, necessary for normal cell division and for the maintenance of normal septation. The sequence is that of Probable GTP-binding protein EngB from Rhizobium meliloti (strain 1021) (Ensifer meliloti).